The primary structure comprises 183 residues: Adenine phosphoribosyltransferase (183 aa).

Belongs to the purine/pyrimidine phosphoribosyltransferase family. As to quaternary structure, homodimer.

Its subcellular location is the cytoplasm. It carries out the reaction AMP + diphosphate = 5-phospho-alpha-D-ribose 1-diphosphate + adenine. It participates in purine metabolism; AMP biosynthesis via salvage pathway; AMP from adenine: step 1/1. Catalyzes a salvage reaction resulting in the formation of AMP, that is energically less costly than de novo synthesis. The protein is Adenine phosphoribosyltransferase of Escherichia coli O157:H7.